A 1137-amino-acid polypeptide reads, in one-letter code: DNA-directed RNA polymerase III subunit RPC2 (1137 aa).

Residues 1084–1099 form a C4-type zinc finger; the sequence is DVCRTCGRMAYCSWCH. Positions 1086, 1089, 1098, and 1101 each coordinate Zn(2+).

This sequence belongs to the RNA polymerase beta chain family. In terms of assembly, component of the RNA polymerase III (Pol III) complex consisting of 17 subunits.

The protein resides in the nucleus. It carries out the reaction RNA(n) + a ribonucleoside 5'-triphosphate = RNA(n+1) + diphosphate. Its function is as follows. DNA-dependent RNA polymerase catalyzes the transcription of DNA into RNA using the four ribonucleoside triphosphates as substrates. Second largest core component of RNA polymerase III which synthesizes small RNAs, such as 5S rRNA and tRNAs. Proposed to contribute to the polymerase catalytic activity and forms the polymerase active center together with the largest subunit. Pol III is composed of mobile elements and Polr3B is part of the core element with the central large cleft and probably a clamp element that moves to open and close the cleft. The sequence is that of DNA-directed RNA polymerase III subunit RPC2 from Drosophila melanogaster (Fruit fly).